The following is a 181-amino-acid chain: Protein GrpE (181 aa).

The protein belongs to the GrpE family. Homodimer.

The protein localises to the cytoplasm. In terms of biological role, participates actively in the response to hyperosmotic and heat shock by preventing the aggregation of stress-denatured proteins, in association with DnaK and GrpE. It is the nucleotide exchange factor for DnaK and may function as a thermosensor. Unfolded proteins bind initially to DnaJ; upon interaction with the DnaJ-bound protein, DnaK hydrolyzes its bound ATP, resulting in the formation of a stable complex. GrpE releases ADP from DnaK; ATP binding to DnaK triggers the release of the substrate protein, thus completing the reaction cycle. Several rounds of ATP-dependent interactions between DnaJ, DnaK and GrpE are required for fully efficient folding. The polypeptide is Protein GrpE (Delftia acidovorans (strain DSM 14801 / SPH-1)).